The chain runs to 601 residues: NAD-dependent malic enzyme 59 kDa isoform, mitochondrial (601 aa).

Residues 1–18 (MWRVARSAASTFRRTRRL) constitute a mitochondrion transit peptide. The active-site Proton donor is the Tyr-129. Arg-182 is an NAD(+) binding site. The active-site Proton acceptor is the Lys-200. Residues Glu-271, Asp-272, and Asp-295 each coordinate a divalent metal cation. NAD(+) contacts are provided by Asp-295 and Asn-444.

Belongs to the malic enzymes family. As to quaternary structure, heterodimer of two related subunits. Mg(2+) is required as a cofactor. Mn(2+) serves as cofactor.

It is found in the mitochondrion matrix. The enzyme catalyses (S)-malate + NAD(+) = pyruvate + CO2 + NADH. The sequence is that of NAD-dependent malic enzyme 59 kDa isoform, mitochondrial from Solanum tuberosum (Potato).